The primary structure comprises 64 residues: Defensin beta 4A (64 aa).

The signal sequence occupies residues 1–23 (MRVLYLLFSFLFIFLMPLPGVFG). 3 disulfides stabilise this stretch: Cys31–Cys60, Cys38–Cys53, and Cys43–Cys61. The segment at 33–48 (KSGAICHPVFCPRRYK) is phosphatidylinositol 4,5-bisphosphate (PIP2) binding.

Belongs to the beta-defensin family. LAP/TAP subfamily. In terms of assembly, monomer. Homodimer. In terms of tissue distribution, expressed in lung epithelial cells (at protein level). Expressed in foreskin, lung and trachea. Lower expression in kidney, uterus and salivary gland tissue. Expressed in epithelial cells of the respiratory tract, with higher expression in distal parenchyma of the lung, trachea, and tonsils, and lower expression in pharynx and adenoid, and low expression in tongue and larynx.

The protein resides in the secreted. Exhibits antimicrobial activity against Gram-negative bacteria and Gram-positive bacteria, with highest activity against Gram-negative bacteria. Antimicrobial activity against P.aruginosa seems to be salt-sensitive and is reduced with high salt concentrations greater than 25 mM. Also exhibits antimicrobial activity against the yeast C.albicans. Permeabilizes C.albicans cell membranes via targeting plasma membrane lipid phosphatidylinositol 4,5-bisphosphate (PIP2), thereby leading to cell fragmentation and cell death. Acts as a ligand for C-C chemokine receptor CCR6. Binds to CCR6 and induces chemotactic activity of CCR6-expressing cells, such as immature dendritic cells and memory T cells. The polypeptide is Defensin beta 4A (DEFB4A) (Homo sapiens (Human)).